Reading from the N-terminus, the 89-residue chain is UPF0213 protein LSEI_1587 (89 aa).

The 76-residue stretch at lysine 4 to valine 79 folds into the GIY-YIG domain.

Belongs to the UPF0213 family.

In Lacticaseibacillus paracasei (strain ATCC 334 / BCRC 17002 / CCUG 31169 / CIP 107868 / KCTC 3260 / NRRL B-441) (Lactobacillus paracasei), this protein is UPF0213 protein LSEI_1587.